The primary structure comprises 247 residues: MTATTTTTSQIFVSEDYNQDPNWYAVDNYTLSHLQPPTRPNHASLHQTLENSAKRGLEDISAFPTQAKFMALQCQLGGVKHALEVGTLGGYTAIYIASLNPDIRIVSIEIDPKSAEVAKENIAAAGYQDRIEVLVGAAIDLLPILQAKVENGEQERFGFTFIDANKDNGWDYFDYAVKMSRPRASIIVDNVVRAGKLVQEDYIKNDINVRGSRRTVENVGKDDRVDAVVLQTLSEKSYDGFLMAVVK.

Residues Glu84, 86–87, and Ala138 each bind S-adenosyl-L-methionine; that span reads GT. Positions 163, 189, and 190 each coordinate a divalent metal cation. A substrate-binding site is contributed by Asp163.

It belongs to the class I-like SAM-binding methyltransferase superfamily. Cation-dependent O-methyltransferase family. CCoAMT subfamily. As to quaternary structure, homodimer. A divalent metal cation is required as a cofactor.

The protein operates within secondary metabolite biosynthesis. Its function is as follows. O-methyltransferase; part of the gene cluster that mediates the biosynthesis of imizoquins A to D, tripeptide-derived alkaloids that serve a protective role against oxidative stress that are essential for normal germination. ImqB is a canonical three-module NRPS that assembles the tripeptide backbone of the imizoquins via condensation of Trp, Tyr, and Leu-derived precursors. N-methylation by imqF and phenol oxidation by imqC, followed by cyclization via the FAD-dependent oxidase imqH carry out the three-step transformation of L-tyrosine into tetrahydroisoquinoline. Importantly, this sequence requires the presence of a free amine in the tyrosine moiety, indicating that isoquinoline formation occurs prior to peptide bond formation. The imidazolidin-4-one ring of imizoquins could form following additional oxidation of the methyl-derived bridgehead carbon by imqH. Lastly, O-methylation by imqG and leucine hydroxylation by imqE complete biosynthesis of the imizoquins. The protein is O-methyltransferase imqG of Aspergillus flavus (strain ATCC 200026 / FGSC A1120 / IAM 13836 / NRRL 3357 / JCM 12722 / SRRC 167).